Consider the following 307-residue polypeptide: Holliday junction branch migration complex subunit RuvB (307 aa).

Positions 1 to 167 (MKLQIKPPNN…FGMILNIDYY (167 aa)) are large ATPase domain (RuvB-L). ATP is bound by residues Ile-5, Gly-48, Lys-51, Thr-52, Thr-53, 114–116 (DDF), Arg-157, Tyr-167, and Arg-204. Thr-52 is a Mg(2+) binding site. The segment at 168 to 233 (SNQEIERIVS…DLAALFKSLM (66 aa)) is small ATPAse domain (RuvB-S). A head domain (RuvB-H) region spans residues 236–307 (KNGLQSIDVQ…RTGRNYLTSC (72 aa)). The DNA site is built by Lys-289 and Arg-294.

This sequence belongs to the RuvB family. In terms of assembly, homohexamer. Forms an RuvA(8)-RuvB(12)-Holliday junction (HJ) complex. HJ DNA is sandwiched between 2 RuvA tetramers; dsDNA enters through RuvA and exits via RuvB. An RuvB hexamer assembles on each DNA strand where it exits the tetramer. Each RuvB hexamer is contacted by two RuvA subunits (via domain III) on 2 adjacent RuvB subunits; this complex drives branch migration. In the full resolvosome a probable DNA-RuvA(4)-RuvB(12)-RuvC(2) complex forms which resolves the HJ.

The protein resides in the cytoplasm. The enzyme catalyses ATP + H2O = ADP + phosphate + H(+). Its function is as follows. The RuvA-RuvB-RuvC complex processes Holliday junction (HJ) DNA during genetic recombination and DNA repair, while the RuvA-RuvB complex plays an important role in the rescue of blocked DNA replication forks via replication fork reversal (RFR). RuvA specifically binds to HJ cruciform DNA, conferring on it an open structure. The RuvB hexamer acts as an ATP-dependent pump, pulling dsDNA into and through the RuvAB complex. RuvB forms 2 homohexamers on either side of HJ DNA bound by 1 or 2 RuvA tetramers; 4 subunits per hexamer contact DNA at a time. Coordinated motions by a converter formed by DNA-disengaged RuvB subunits stimulates ATP hydrolysis and nucleotide exchange. Immobilization of the converter enables RuvB to convert the ATP-contained energy into a lever motion, pulling 2 nucleotides of DNA out of the RuvA tetramer per ATP hydrolyzed, thus driving DNA branch migration. The RuvB motors rotate together with the DNA substrate, which together with the progressing nucleotide cycle form the mechanistic basis for DNA recombination by continuous HJ branch migration. Branch migration allows RuvC to scan DNA until it finds its consensus sequence, where it cleaves and resolves cruciform DNA. This Mycoplasma pneumoniae (strain ATCC 29342 / M129 / Subtype 1) (Mycoplasmoides pneumoniae) protein is Holliday junction branch migration complex subunit RuvB.